Consider the following 429-residue polypeptide: Glucose-1-phosphate adenylyltransferase (429 aa).

Alpha-D-glucose 1-phosphate-binding positions include Gly162, 177 to 178, and Ser209; that span reads EK.

Belongs to the bacterial/plant glucose-1-phosphate adenylyltransferase family. As to quaternary structure, homotetramer.

The catalysed reaction is alpha-D-glucose 1-phosphate + ATP + H(+) = ADP-alpha-D-glucose + diphosphate. It participates in glycan biosynthesis; glycogen biosynthesis. Its function is as follows. Involved in the biosynthesis of ADP-glucose, a building block required for the elongation reactions to produce glycogen. Catalyzes the reaction between ATP and alpha-D-glucose 1-phosphate (G1P) to produce pyrophosphate and ADP-Glc. This is Glucose-1-phosphate adenylyltransferase from Nostoc punctiforme (strain ATCC 29133 / PCC 73102).